We begin with the raw amino-acid sequence, 469 residues long: Argininosuccinate lyase (469 aa).

Belongs to the lyase 1 family. Argininosuccinate lyase subfamily.

It is found in the cytoplasm. It carries out the reaction 2-(N(omega)-L-arginino)succinate = fumarate + L-arginine. It functions in the pathway amino-acid biosynthesis; L-arginine biosynthesis; L-arginine from L-ornithine and carbamoyl phosphate: step 3/3. In Cupriavidus metallidurans (strain ATCC 43123 / DSM 2839 / NBRC 102507 / CH34) (Ralstonia metallidurans), this protein is Argininosuccinate lyase.